Reading from the N-terminus, the 594-residue chain is Suppressor of hairless protein (594 aa).

Positions 20 to 87 are disordered; sequence ETTVVNPNGS…QQQQQHQQQM (68 aa). A compositionally biased stretch (low complexity) spans 58 to 87; it reads QQQQQQLQVHHQQQQQQQQQQQQQQHQQQM. DNA-binding stretches follow at residues 131 to 141, 239 to 244, and 266 to 271; these read QKSYGNEKRFF, SKPSKK, and RLRSQT. The IPT/TIG domain occupies 429-519; sequence PIVNSLNLNG…YATGLTFTYT (91 aa). Low complexity-rich tracts occupy residues 542–562 and 569–580; these read NNNN…AGSP and QQQQQQHQALPS. The tract at residues 542–594 is disordered; that stretch reads NNNNNITSISNNNNSNNAGSPAAGGGLQQQQQQHQALPSISEVQWNSHGSGLS. The segment covering 582–594 has biased composition (polar residues); the sequence is SEVQWNSHGSGLS.

The protein belongs to the Su(H) family. As to quaternary structure, interacts with activated cleaved Notch. Interacts with Hairless, this interaction preventing its DNA-binding activity. Interacts with insv (via BEN domain).

Its subcellular location is the nucleus. The protein resides in the cytoplasm. Its function is as follows. Transcriptional regulator that plays a central role in Notch signaling, a signaling pathway involved in cell-cell communication that regulates a broad spectrum of cell-fate determinations. Binds directly the 5'-GTGRGAR-3' DNA consensus sequence, which is present in the regulatory region of several genes. Acts as a transcriptional repressor when it is not associated with Notch proteins. When associated with some Notch protein, it acts as a transcriptional activator that activates transcription of Notch target genes. Required for transcription of Sim. Specifically binds to the immunoglobulin kappa-type J segment recombination signal sequence. Required for neurogenesis in imaginal disks. In the larval brain, might play a role as a transducer of Notch signaling during type II neuroblast development. Also functions independently of the Notch pathway, in the development of the bristle sensory organ precursor cell. In Drosophila melanogaster (Fruit fly), this protein is Suppressor of hairless protein (Su(H)).